Consider the following 630-residue polypeptide: Threonine--tRNA ligase (630 aa).

Residues 1–137 (MKVLLIHSDY…PLSELSRKIT (137 aa)) form an editing domain region. The catalytic stretch occupies residues 207-506 (PHVKFITEKE…ADAGAPPMLP (300 aa)). Positions 299, 351, and 475 each coordinate Zn(2+).

It belongs to the class-II aminoacyl-tRNA synthetase family. In terms of assembly, homodimer. Zn(2+) serves as cofactor.

The protein resides in the cytoplasm. It carries out the reaction tRNA(Thr) + L-threonine + ATP = L-threonyl-tRNA(Thr) + AMP + diphosphate + H(+). Catalyzes the attachment of threonine to tRNA(Thr) in a two-step reaction: L-threonine is first activated by ATP to form Thr-AMP and then transferred to the acceptor end of tRNA(Thr). Also edits incorrectly charged L-seryl-tRNA(Thr). This Methanococcus aeolicus (strain ATCC BAA-1280 / DSM 17508 / OCM 812 / Nankai-3) protein is Threonine--tRNA ligase.